A 278-amino-acid polypeptide reads, in one-letter code: TIMELESS-interacting protein (278 aa).

The tract at residues 1 to 59 (MLEQEENGLFEIPDYEHVEDETFPPFPPPASPERDPADAEPEEGSGSGVPVPPKRTVKR) is disordered. The interaction with TIMELESS stretch occupies residues 64 to 140 (LDATRLTSER…KEVQTCLKRI (77 aa)). 2 disordered regions span residues 155–197 (NDEV…EEQQ) and 216–278 (LSNS…TNLD). A phosphoserine mark is found at serine 191 and serine 219. Positions 226–239 (VTVEENSTGEDQEE) are enriched in acidic residues. Threonine 233 is subject to Phosphothreonine. The span at 259–278 (THEEEQCKAEETQLDHTNLD) shows a compositional bias: basic and acidic residues.

Belongs to the CSM3 family. In terms of assembly, interacts with MCM6 and MCM7. Interacts with TIMELESS (via N-terminus), which impairs TIMELESS self-association. Interacts with RPA2 and PRDX2. Expressed in brain.

The protein resides in the cytoplasm. It localises to the nucleus. Functionally, plays an important role in the control of DNA replication and the maintenance of replication fork stability. Important for cell survival after DNA damage or replication stress. May be specifically required for the ATR-CHEK1 pathway in the replication checkpoint induced by hydroxyurea or ultraviolet light. Forms a complex with TIMELESS and this complex regulates DNA replication processes under both normal and stress conditions, stabilizes replication forks and influences both CHEK1 phosphorylation and the intra-S phase checkpoint in response to genotoxic stress. This chain is TIMELESS-interacting protein (Tipin), found in Mus musculus (Mouse).